The sequence spans 299 residues: Ethylmalonyl-CoA decarboxylase (299 aa).

Residue Lys209 is modified to N6-acetyllysine; alternate. Residue Lys209 is modified to N6-succinyllysine; alternate. Position 293 is an N6-succinyllysine (Lys293).

It belongs to the enoyl-CoA hydratase/isomerase family.

It localises to the cytoplasm. It is found in the cytosol. It catalyses the reaction (2S)-ethylmalonyl-CoA + H(+) = butanoyl-CoA + CO2. The enzyme catalyses (S)-methylmalonyl-CoA + H(+) = propanoyl-CoA + CO2. It carries out the reaction (2R)-ethylmalonyl-CoA + H(+) = butanoyl-CoA + CO2. Its function is as follows. Decarboxylates ethylmalonyl-CoA, a potentially toxic metabolite, to form butyryl-CoA, suggesting it might be involved in metabolite proofreading. Acts preferentially on (S)-ethylmalonyl-CoA but also has some activity on the (R)-isomer. Also has methylmalonyl-CoA decarboxylase activity at lower level. This Rattus norvegicus (Rat) protein is Ethylmalonyl-CoA decarboxylase (Echdc1).